A 369-amino-acid polypeptide reads, in one-letter code: GTPase Obg (369 aa).

An Obg domain is found at 1–159 (MKFIDEAKIE…RELRLELKVL (159 aa)). The segment at 128-148 (IHFKSSTNRAPRQKSEGKEGE) is disordered. Residues 160–333 (ADIGLLGMPN…LVTEIYEYIA (174 aa)) enclose the OBG-type G domain. GTP is bound by residues 166 to 173 (GMPNAGKS), 191 to 195 (FTTLH), 213 to 216 (DIPG), 283 to 286 (NKLD), and 314 to 316 (SAL). Positions 173 and 193 each coordinate Mg(2+).

The protein belongs to the TRAFAC class OBG-HflX-like GTPase superfamily. OBG GTPase family. In terms of assembly, monomer. Mg(2+) is required as a cofactor.

Its subcellular location is the cytoplasm. Its function is as follows. An essential GTPase which binds GTP, GDP and possibly (p)ppGpp with moderate affinity, with high nucleotide exchange rates and a fairly low GTP hydrolysis rate. Plays a role in control of the cell cycle, stress response, ribosome biogenesis and in those bacteria that undergo differentiation, in morphogenesis control. The polypeptide is GTPase Obg (Janthinobacterium sp. (strain Marseille) (Minibacterium massiliensis)).